Consider the following 255-residue polypeptide: Urease accessory protein UreD 1 (255 aa).

The protein belongs to the UreD family. In terms of assembly, ureD, UreF and UreG form a complex that acts as a GTP-hydrolysis-dependent molecular chaperone, activating the urease apoprotein by helping to assemble the nickel containing metallocenter of UreC. The UreE protein probably delivers the nickel.

The protein resides in the cytoplasm. In terms of biological role, required for maturation of urease via the functional incorporation of the urease nickel metallocenter. This is Urease accessory protein UreD 1 from Streptomyces griseus subsp. griseus (strain JCM 4626 / CBS 651.72 / NBRC 13350 / KCC S-0626 / ISP 5235).